Reading from the N-terminus, the 782-residue chain is Protein phosphatase 1 regulatory subunit 12C (782 aa).

Low complexity-rich tracts occupy residues 1 to 19 (MSGE…AAAA) and 77 to 88 (DPGPGSGAASDP). Disordered regions lie at residues 1–45 (MSGE…GERR) and 77–98 (DPGP…RAVL). S2 bears the N-acetylserine mark. 4 ANK repeats span residues 104–133 (DGIS…TVNQ), 137–166 (EGWT…NIAA), 230–259 (TGAS…DTEL), and 263–292 (DGWT…GMDS). Residues 301-332 (CDLADEDVMNLLEELAQKQEDLRNQKEGSQGR) are a coiled coil. Residues 321 to 685 (DLRNQKEGSQ…HEEPDGGFRK (365 aa)) form a disordered region. Residues 332–341 (RGQESQVPSS) show a composition bias toward polar residues. Residues 353–369 (SSREKISLQDLSKERRP) show a composition bias toward basic and acidic residues. Residues 401–413 (VSSPVSSNPKSPV) show a composition bias toward low complexity. Phosphoserine is present on residues S403, S411, S431, S454, and S509. The segment covering 451–465 (RSASSSLLEKASTQA) has biased composition (polar residues). Over residues 537 to 546 (VRDEESESQR) the composition is skewed to basic and acidic residues. The span at 547 to 557 (KARSRLMRQSR) shows a compositional bias: basic residues. At T560 the chain carries Phosphothreonine. Position 647 is a phosphoserine (S647). Residues 664–685 (SQRDLVLESKQEHEEPDGGFRK) are compositionally biased toward basic and acidic residues. Residues 681–782 (GGFRKMYTEL…LIRVISKLSK (102 aa)) adopt a coiled-coil conformation.

As to quaternary structure, PP1 comprises a catalytic subunit, PPP1CA, PPP1CB or PPP1CC, and one or several targeting or regulatory subunits. PPP1R12C mediates binding to myosin. Interacts via its N-terminus with PPP1CB. Interacts with IL16. Interacts with the coiled-coil domain of MPRIP. Interacts with NOD2. Phosphorylation at Thr-560 is essential for its interaction with PPP1CB.

Its subcellular location is the cytoplasm. It is found in the cytoskeleton. It localises to the stress fiber. Its function is as follows. Regulates myosin phosphatase activity. The polypeptide is Protein phosphatase 1 regulatory subunit 12C (Mus musculus (Mouse)).